The following is a 222-amino-acid chain: Small ribosomal subunit protein uS7m (222 aa).

The N-terminal 14 residues, 1 to 14 (MSKKLANFAQKRWI), are a transit peptide targeting the mitochondrion.

The protein belongs to the universal ribosomal protein uS7 family. Component of the mitochondrial ribosome small subunit (28S) which comprises a 12S rRNA and about 30 distinct proteins.

It localises to the mitochondrion. This Caenorhabditis briggsae protein is Small ribosomal subunit protein uS7m (mrps-7).